A 291-amino-acid chain; its full sequence is uncharacterized protein (291 aa).

6 consecutive transmembrane segments (helical) span residues 13–33 (FDLFFAAIACICGILKVMEMG), 40–60 (LGTVSKNGMAVLAVLVALGFL), 81–101 (GFLNPCVILSVIEFFMMLICI), 128–148 (FGLFGAIFMPYIFAECIRLLL), 158–178 (VILGILVLGCLAMAGLAYLEY), and 220–240 (GNVWMYLAMFASFTLVLILLA). N-linked (GlcNAc...) asparagine glycosylation is present at Asn249. The segment at 269-291 (MASEDPPKDPLPRQEGGGGDTIA) is disordered.

The protein localises to the membrane. This is an uncharacterized protein from Encephalitozoon cuniculi (strain GB-M1) (Microsporidian parasite).